The sequence spans 111 residues: Class I hydrophobin 2 (111 aa).

The first 21 residues, 1-21, serve as a signal peptide directing secretion; that stretch reads MFSRVMFCTFLILPLLAAATA. 4 cysteine pairs are disulfide-bonded: Cys-30–Cys-90, Cys-37–Cys-84, Cys-38–Cys-71, and Cys-91–Cys-104.

Belongs to the fungal hydrophobin family. In terms of assembly, self-assembles to form functional amyloid fibrils called rodlets. Self-assembly into fibrillar rodlets occurs spontaneously at hydrophobic:hydrophilic interfaces and the rodlets further associate laterally to form amphipathic monolayers. Behavior depends on environmental conditions: (1) when the pH increases or in the presence of Ca(2+) ions, an assembled state, beta-sheet rich, is formed; (2) when the solvent polarity increases, the vhm2 shows an increased tendency to reach hydrophobic/hydrophilic interfaces, with no detectable conformational change; and (3) at high temperature, a reversible conformational change and reversible aggregation occur. The physical and chemical properties, both in solution and as a biofilm, are affected by polysaccharides that act as hydrophilic stabilizer.

It localises to the secreted. The protein resides in the cell wall. Functionally, aerial growth, conidiation, and dispersal of filamentous fungi in the environment rely upon a capability of their secreting small amphipathic proteins called hydrophobins (HPBs) with low sequence identity. Class I can self-assemble into an outermost layer of rodlet bundles on aerial cell surfaces, conferring cellular hydrophobicity that supports fungal growth, development and dispersal; whereas Class II form highly ordered films at water-air interfaces through intermolecular interactions but contribute nothing to the rodlet structure. Vmh2 is a class I hydrophobin involved in biofilm formation and is essential for the maintenance of the surface hydrophobicity of the mycelium. Seems not to be involved in hyphal resistance against environmental stress. This chain is Class I hydrophobin 2, found in Pleurotus ostreatus (strain PC15) (Oyster mushroom).